Consider the following 410-residue polypeptide: Lissencephaly-1 homolog A (410 aa).

The LisH domain maps to 7 to 39; sequence QRDELNRAIADYLRSNGYEEAYSTFKKEAELDM. The stretch at 56-82 forms a coiled coil; it reads TSVIRLQKKVMELESKLNEAKEEITLG. WD repeat units lie at residues 106 to 147, 148 to 187, 190 to 229, 232 to 271, 274 to 333, 336 to 375, and 378 to 410; these read GHRS…RTLK, GHTD…CIRT, GHDH…CVKT, GHRE…CKAE, EHEH…CLMT, GHDN…CMKT, and AHEH…WECR.

Belongs to the WD repeat LIS1/nudF family. Can self-associate. Component of the cytosolic PAF-AH (I) heterotetrameric enzyme, which is composed of PAFAH1B1 (beta), PAFAH1B2 (alpha2) and PAFAH1B3 (alpha1) subunits. The catalytic activity of the enzyme resides in the alpha1 (PAFAH1B3) and alpha2 (PAFAH1B2) subunits, whereas the beta subunit (PAFAH1B1) has regulatory activity. Trimer formation is not essential for the catalytic activity. Interacts with dynein, dynactin, nde1 and ndel1.

It is found in the cytoplasm. Its subcellular location is the cytoskeleton. It localises to the microtubule organizing center. The protein resides in the centrosome. Its function is as follows. Regulatory subunit (beta subunit) of the cytosolic type I platelet-activating factor (PAF) acetylhydrolase (PAF-AH (I)), an enzyme that catalyzes the hydrolyze of the acetyl group at the sn-2 position of PAF and its analogs and participates in PAF inactivation. Regulates the PAF-AH (I) activity in a catalytic dimer composition-dependent manner. Positively regulates the activity of the minus-end directed microtubule motor protein dynein. May enhance dynein-mediated microtubule sliding by targeting dynein to the microtubule plus end. Required for several dynein- and microtubule-dependent processes such as the maintenance of Golgi integrity, the peripheral transport of microtubule fragments and the coupling of the nucleus and centrosome. May be required for proliferation of neuronal precursors and neuronal migration. This Salmo salar (Atlantic salmon) protein is Lissencephaly-1 homolog A (pafah1b1-1).